The primary structure comprises 523 residues: MSLPRFRLVQGKAIGERSTPGVSTPEPAPPQIKQEVDYQDAHQMAPEPVEAPQAQNHQMQPPRQPIQQQMQHFQSPSPMAPQGPPGTPQNSAAAAAAASDDKNVTKCVRFLKTLINLSNNDDPEMPDKAARVKELIRGVIYLETTAEEFTRNLQQVLKSQAQPHLLPFLQNTLPALRNAVRNGTASVEGVNPPPGYVFNNGRTPGPPQPPPPQQQSQQQPPLEMRQIPNPNQIPPQMVQGGPHMVSVGARPMIRPMGPGGPSPMGLQGPVRGPMGHQMVQMHPPPPPQQIQQQHPAPPVEMEVEENLQPTAAATATRQYPEGSLKSSILKPDEVLNRITKRMMSSCSVEEEALVAISDAVESHLRELITLMAGVAEHRVESLRIPENYVAIDDVKRQLRFLEDLDRQEEELRESREKESLIRMSKNKNSGKETIEKAKEMQRQDAEAKRNRDANAAAIAALSSNKTVKNKWENTGAATTAPRPRTVRVTTRDLHLLVNQDSRFTGTFIREKMSYGGPAVDTTI.

2 disordered regions span residues 1–100 (MSLP…AASD) and 185–241 (ASVE…VQGG). Residues 58-77 (QMQPPRQPIQQQMQHFQSPS) are compositionally biased toward low complexity. A compositionally biased stretch (pro residues) spans 78 to 87 (PMAPQGPPGT). Residues 101-199 (DKNVTKCVRF…VNPPPGYVFN (99 aa)) enclose the TAFH domain. Pro residues predominate over residues 204–213 (PGPPQPPPPQ). Residues 214-236 (QQSQQQPPLEMRQIPNPNQIPPQ) show a composition bias toward low complexity. The histone-fold stretch occupies residues 329–383 (LKPDEVLNRITKRMMSSCSVEEEALVAISDAVESHLRELITLMAGVAEHRVESLR). Residues 333 to 382 (EVLNRITKRMMSSCSVEEEALVAISDAVESHLRELITLMAGVAEHRVESL) form a necessary and sufficient for interaction with oma-1 region. The segment at 407–435 (QEEELRESREKESLIRMSKNKNSGKETIE) is disordered.

The protein belongs to the TAF4 family. As to quaternary structure, component of the TFIID basal transcription factor complex, composed of TATA-box-binding protein tbp-1, and a number of TBP-associated factors (TAFs). Interacts (via histone-fold domain) with oma-1 (via histone-fold domain). May also interact with oma-2. Interacts (via histone-fold domain) with taf-12 (via the histone-fold domain).

The protein localises to the nucleus. It localises to the cytoplasm. In terms of biological role, the TFIID basal transcription factor complex plays a major role in the initiation of RNA polymerase II (Pol II)-dependent transcription. TFIID recognizes and binds promoters via its subunit tbp-1, a TATA-box-binding protein, and promotes assembly of the pre-initiation complex (PIC). The TFIID complex consists of tbp-1 and TBP-associated factors (TAFs), including taf-4. Essential for early embryonic development, probably acting via activating transcription initiation by RNA polymerase II, as part of the TFIID complex. In early embryos, but not oocytes, remains, presumably inactive, in the cytoplasm as a result of binding to oma-1. Upon degradation of oma-1, taf-4 is released and bound by taf-12, and the taf-4/12 heterodimer translocates to the nucleus and transcriptional repression is relieved. Involved in lifespan extension in a manner dependent upon mitochondrial function. Plays a role in modulating polyribosome formation. This is Transcription initiation factor TFIID subunit 4 from Caenorhabditis elegans.